Consider the following 120-residue polypeptide: NAD(P)H-quinone oxidoreductase subunit 3, chloroplastic (120 aa).

The next 3 membrane-spanning stretches (helical) occupy residues 10–30 (FLVFLIIACLIPVLALSASKL), 64–84 (MFALVFVIFDVETVFLYPWAV), and 89–109 (MGFISFLEALVFLSILIVGLV).

This sequence belongs to the complex I subunit 3 family. NDH is composed of at least 16 different subunits, 5 of which are encoded in the nucleus.

Its subcellular location is the plastid. It is found in the chloroplast thylakoid membrane. The catalysed reaction is a plastoquinone + NADH + (n+1) H(+)(in) = a plastoquinol + NAD(+) + n H(+)(out). It carries out the reaction a plastoquinone + NADPH + (n+1) H(+)(in) = a plastoquinol + NADP(+) + n H(+)(out). Functionally, NDH shuttles electrons from NAD(P)H:plastoquinone, via FMN and iron-sulfur (Fe-S) centers, to quinones in the photosynthetic chain and possibly in a chloroplast respiratory chain. The immediate electron acceptor for the enzyme in this species is believed to be plastoquinone. Couples the redox reaction to proton translocation, and thus conserves the redox energy in a proton gradient. This chain is NAD(P)H-quinone oxidoreductase subunit 3, chloroplastic, found in Chlorokybus atmophyticus (Soil alga).